The following is a 107-amino-acid chain: Nucleoid-associated protein YaaK (107 aa).

The segment at 1-24 (MRGGMGNMQKMMKQMQKMQKDMAK) is disordered. Over residues 8–17 (MQKMMKQMQK) the composition is skewed to low complexity.

This sequence belongs to the YbaB/EbfC family. In terms of assembly, homodimer.

It is found in the cytoplasm. The protein localises to the nucleoid. Its function is as follows. Binds to DNA and alters its conformation. May be involved in regulation of gene expression, nucleoid organization and DNA protection. This Bacillus subtilis (strain 168) protein is Nucleoid-associated protein YaaK (yaaK).